The primary structure comprises 504 residues: Maturase K (504 aa).

It belongs to the intron maturase 2 family. MatK subfamily.

Its subcellular location is the plastid. It localises to the chloroplast. Functionally, usually encoded in the trnK tRNA gene intron. Probably assists in splicing its own and other chloroplast group II introns. The chain is Maturase K from Vigna unguiculata (Cowpea).